The sequence spans 420 residues: MSNVRYTSNLTRETYALILAGGRGSRLHELTDWRAKPALYFGGKFRIIDFPLSNCINSGIRRVGVVTQYKSHSLIRHVMRGWGHFKKELGESVEILPASQRYSENWYQGTADAVFQNIDIIRHELPKYVMVLSGDHVYRMDYAGLLAAHAESGADMTVSCLEVPIAEAAGSFGVMEVDEEMRILGFEEKPQQPKHSPGNPEMCLASMGNYLFNTEFLFDQLKKDALNESSDRDFGKDIIPAIIEKHNVFAYPFKSAFPNEQAYWRDVGTLDSFWQANMELLSPTPALNLYDAKWPIWTFQEQLPPAKFVFDDDDRRGMALDSIVSGGCIISGATVRRSVLFNEVRVCSYSLVEDSVVLPDVVVLRHCKIKNAILDRGCIIPEGMVIGYNHDHDRAKGFRVSEKGVTLVTRDMLGLPVGYE.

Residues tyrosine 107, glycine 173, 188–189 (EK), and serine 206 each bind alpha-D-glucose 1-phosphate.

It belongs to the bacterial/plant glucose-1-phosphate adenylyltransferase family. As to quaternary structure, homotetramer.

The catalysed reaction is alpha-D-glucose 1-phosphate + ATP + H(+) = ADP-alpha-D-glucose + diphosphate. It participates in glycan biosynthesis; glycogen biosynthesis. Its function is as follows. Involved in the biosynthesis of ADP-glucose, a building block required for the elongation reactions to produce glycogen. Catalyzes the reaction between ATP and alpha-D-glucose 1-phosphate (G1P) to produce pyrophosphate and ADP-Glc. In Shewanella baltica (strain OS155 / ATCC BAA-1091), this protein is Glucose-1-phosphate adenylyltransferase.